The chain runs to 58 residues: Large ribosomal subunit protein uL30 (58 aa).

The protein belongs to the universal ribosomal protein uL30 family. In terms of assembly, part of the 50S ribosomal subunit.

This Desulfovibrio desulfuricans (strain ATCC 27774 / DSM 6949 / MB) protein is Large ribosomal subunit protein uL30.